The chain runs to 385 residues: S-adenosylmethionine synthase (385 aa).

His-15 is an ATP binding site. A Mg(2+)-binding site is contributed by Asp-17. Residue Glu-43 coordinates K(+). 2 residues coordinate L-methionine: Glu-56 and Gln-99. The segment at Gln-99–Glu-109 is flexible loop. Residues Asp-164–Lys-166, Arg-230–Phe-231, Asp-239, Arg-245–Lys-246, Ala-262, and Lys-266 contribute to the ATP site. Asp-239 provides a ligand contact to L-methionine. Lys-270 serves as a coordination point for L-methionine.

The protein belongs to the AdoMet synthase family. In terms of assembly, homotetramer; dimer of dimers. It depends on Mg(2+) as a cofactor. K(+) is required as a cofactor.

Its subcellular location is the cytoplasm. The enzyme catalyses L-methionine + ATP + H2O = S-adenosyl-L-methionine + phosphate + diphosphate. The protein operates within amino-acid biosynthesis; S-adenosyl-L-methionine biosynthesis; S-adenosyl-L-methionine from L-methionine: step 1/1. Catalyzes the formation of S-adenosylmethionine (AdoMet) from methionine and ATP. The overall synthetic reaction is composed of two sequential steps, AdoMet formation and the subsequent tripolyphosphate hydrolysis which occurs prior to release of AdoMet from the enzyme. The sequence is that of S-adenosylmethionine synthase from Hydrogenovibrio crunogenus (strain DSM 25203 / XCL-2) (Thiomicrospira crunogena).